We begin with the raw amino-acid sequence, 486 residues long: Carboxypeptidase Y homolog ARB_07161 (486 aa).

Residues 1–17 form the signal peptide; that stretch reads MKGLLSLLLVGAANALA. N-linked (GlcNAc...) asparagine glycosylation is present at Asn-111. Ser-241 is an active-site residue. Disulfide bonds link Cys-281–Cys-305, Cys-288–Cys-298, and Cys-327–Cys-334. Asp-403 is an active-site residue. Cys-406 is a binding site for substrate. Residue Asn-430 is glycosylated (N-linked (GlcNAc...) asparagine). The active site involves His-462.

This sequence belongs to the peptidase S10 family.

It localises to the secreted. The catalysed reaction is Release of a C-terminal amino acid with broad specificity.. Involved in degradation of small peptides. The chain is Carboxypeptidase Y homolog ARB_07161 from Arthroderma benhamiae (strain ATCC MYA-4681 / CBS 112371) (Trichophyton mentagrophytes).